The sequence spans 457 residues: TnpB-like protein ORF457 (457 aa).

The interval 1–22 (MPPSSGQLLGDEEREPTSTPAI) is disordered.

This sequence in the N-terminal section; belongs to the transposase 2 family. In the C-terminal section; belongs to the transposase 35 family.

The polypeptide is TnpB-like protein ORF457 (Acidianus two-tailed virus (ATV)).